The following is a 159-amino-acid chain: Fimbrial protein EcpB (159 aa).

The propeptide at 1-6 (MYKQKG) is leader sequence. Residue phenylalanine 7 is modified to N-methylphenylalanine. Residues 7–29 (FTLIELMIVIAIIGILAAIALPL) form a helical membrane-spanning segment. An intrachain disulfide couples cysteine 137 to cysteine 156.

The protein belongs to the N-Me-Phe pilin family.

It localises to the fimbrium. The protein localises to the membrane. This is Fimbrial protein EcpB (ecpB) from Eikenella corrodens.